The primary structure comprises 452 residues: MAKNMAPILHILVISLSYSFLFVTSSSQNSQSLYHNSQPTSSSKPNLLVLPIQQDASTKLHWGNILKRTPLMQVPVLLDLNGKHLWVTCSQHYSSSTYQAPFCHSTQCSRANTHQCFTCTDSTTSRPGCHNNTCGLISSNPVTQESGLGELAQDVLALHSTHGSKLGSLVKIPQFLFSCAPTFLTQKGLPNNVQGALGLGHAPISLPNQLFSHFGLKRQFTMCLSSYPTSNGAILFGDINDPNNNNYIHNSLDVLHDMVYTPLTISKQGEYFIQVSAIRVNKHMVIPTKNPSMFPSSSSSSYHESSEIGGAMITTTNPYTVLRHSIFEVFTQVFANNVPKQAQVKAVGPFGLCYDTKKISGGVPSVDLIMDKSDVVWRISGENLMVQAQDGVSCLGFVDGGVHTRAGIALGTHQLEENLVVFDLARSRVGFNTNSLKSHGKSCSNLFDLNNP.

Residues 1–33 (MAKNMAPILHILVISLSYSFLFVTSSSQNSQSL) form the signal peptide. The region spanning 61-432 (HWGNILKRTP…DLARSRVGFN (372 aa)) is the Peptidase A1 domain. Disulfide bonds link cysteine 89–cysteine 179, cysteine 103–cysteine 116, cysteine 108–cysteine 134, cysteine 119–cysteine 129, and cysteine 353–cysteine 394. A glycan (N-linked (GlcNAc...) asparagine) is linked at asparagine 131.

It belongs to the peptidase A1 family. As to quaternary structure, two-subunit monomeric unit made of alpha and beta subunits coupled by disulfide bonds (at pH 4.5 and under non-reducing conditions). Monomeric alpha and beta subunits in reducing conditions. Can also form oligomers including dimer, tetramer and cyclic hexamer (trimer of dimers) (at pH &gt; 5.5). Component of globulins complexes which accumulate in seeds. Interacts with flavonoids (e.g. apigenin glucosides) present in globulins complexes. Glycosylated on alpha chain at Asn-131; identified N-glycans bound are Man(2)(Xyl)(Fuc)GlcNAc(2), Man(3)(Xyl)(Fuc)GlcNAc(2), GlcNAcMan(3)(Xyl)(Fuc)GlcNAc(2) and GlcNAc(2)Man(3)(Xyl)(Fuc)GlcNAc(2). Expressed in developing seeds and in the young roots and cotyledons of germinating seeds and young seedlings.

The protein localises to the secreted. Its subcellular location is the extracellular space. Functionally, sulfur-rich seed storage protein that remains undegraded at germination. The uncleaved form exhibits some inhibitory activity against GH11 xylanase from T.longibrachiatum, more at pH 7 than at pH 5.3, but not against GH12 xyloglucan-specific endoglucanase (XEG) from A.aculeatus. Binds to model phospholipid membranes containing dimyristoyl phosphatidylglycerol (DMPG), dioleoyl phosphatidic acid (DOPA) or mixture of dimyristoyl phosphatidylcholine and dimyristoyl phosphatidylglycerol (DMPC:DMPG), or mixture of dioleoyl phosphatidic acid and dioleoyl phosphatidylcholine (DOPC:DOPA). In Lupinus albus (White lupine), this protein is Gamma conglutin 1.